We begin with the raw amino-acid sequence, 271 residues long: Zinc finger CCHC domain-containing protein 9 (271 aa).

The segment at 1–40 (MTRWARVSTTYNKRPLPATSWEDMKKGSFEGTSQNLPKRK) is disordered. Ser48 carries the post-translational modification Phosphoserine. 4 consecutive CCHC-type zinc fingers follow at residues 128-145 (MVCFHCRKPGHGIADCPA), 155-172 (GICYRCGSTEHEITKCKA), 184-201 (AKCFVCGEMGHLSRSCPD), and 211-228 (GGCKLCGSVEHLKKDCPE).

The protein localises to the nucleus. It localises to the nucleolus. Functionally, may down-regulate transcription mediated by NF-kappa-B and the serum response element. The protein is Zinc finger CCHC domain-containing protein 9 (ZCCHC9) of Homo sapiens (Human).